Here is a 393-residue protein sequence, read N- to C-terminus: Peptidyl-prolyl cis-trans isomerase CYP7 (393 aa).

The PPIase cyclophilin-type domain maps to 8-196; it reads YLDISIDKKP…SDVRISDCGV (189 aa). TPR repeat units lie at residues 240–273, 292–325, and 330–363; these read ANII…INEY, MKIY…DNVP, and AKAY…NPDD.

Interacts with RPD3 and CNS1.

The enzyme catalyses [protein]-peptidylproline (omega=180) = [protein]-peptidylproline (omega=0). In terms of biological role, PPIases accelerate the folding of proteins. It catalyzes the cis-trans isomerization of proline imidic peptide bonds in oligopeptides. Plays a major role in negative regulation of the heat shock transcription factor (HSF). The chain is Peptidyl-prolyl cis-trans isomerase CYP7 (CPR7) from Saccharomyces cerevisiae (strain ATCC 204508 / S288c) (Baker's yeast).